The sequence spans 589 residues: Cyclohexane-1,2-dione hydrolase (589 aa).

Residue E52 coordinates thiamine diphosphate. The tract at residues 400 to 480 is thiamine pyrophosphate binding; that stretch reads NHTLPMFGGA…VITMVFTNES (81 aa). Positions 451 and 478 each coordinate Mg(2+).

The protein belongs to the TPP enzyme family. In terms of assembly, homodimer. The cofactor is Mg(2+). Thiamine diphosphate serves as cofactor. Requires FAD as cofactor.

It catalyses the reaction cyclohexan-1,2-dione + H2O = 6-oxohexanoate + H(+). In terms of biological role, catalyzes the ring-opening cleavage of the alicyclic alcohol cyclohexane-1,2-dione. The polypeptide is Cyclohexane-1,2-dione hydrolase (Azoarcus sp).